Consider the following 212-residue polypeptide: ATP phosphoribosyltransferase 2 (212 aa).

The protein belongs to the ATP phosphoribosyltransferase family. Short subfamily. Heteromultimer composed of HisG and HisZ subunits.

Its subcellular location is the cytoplasm. It catalyses the reaction 1-(5-phospho-beta-D-ribosyl)-ATP + diphosphate = 5-phospho-alpha-D-ribose 1-diphosphate + ATP. Its pathway is amino-acid biosynthesis; L-histidine biosynthesis; L-histidine from 5-phospho-alpha-D-ribose 1-diphosphate: step 1/9. In terms of biological role, catalyzes the condensation of ATP and 5-phosphoribose 1-diphosphate to form N'-(5'-phosphoribosyl)-ATP (PR-ATP). Has a crucial role in the pathway because the rate of histidine biosynthesis seems to be controlled primarily by regulation of HisG enzymatic activity. The sequence is that of ATP phosphoribosyltransferase 2 (hisG2) from Geobacter sulfurreducens (strain ATCC 51573 / DSM 12127 / PCA).